The primary structure comprises 604 residues: Aspartate--tRNA(Asp/Asn) ligase (604 aa).

E169 serves as a coordination point for L-aspartate. Residues 193–196 (QLFK) are aspartate. An L-aspartate-binding site is contributed by R215. ATP is bound by residues 215–217 (RDE) and Q224. Residue H456 participates in L-aspartate binding. E490 is an ATP binding site. L-aspartate is bound at residue R497. 542-545 (GWDR) contacts ATP. The interval 571 to 604 (PLTGAPAPITAQQRKEAGVDAQPEPKQAEAEPEA) is disordered.

This sequence belongs to the class-II aminoacyl-tRNA synthetase family. Type 1 subfamily. In terms of assembly, homodimer.

Its subcellular location is the cytoplasm. The enzyme catalyses tRNA(Asx) + L-aspartate + ATP = L-aspartyl-tRNA(Asx) + AMP + diphosphate. Its function is as follows. Aspartyl-tRNA synthetase with relaxed tRNA specificity since it is able to aspartylate not only its cognate tRNA(Asp) but also tRNA(Asn). Reaction proceeds in two steps: L-aspartate is first activated by ATP to form Asp-AMP and then transferred to the acceptor end of tRNA(Asp/Asn). The polypeptide is Aspartate--tRNA(Asp/Asn) ligase (Micrococcus luteus (strain ATCC 4698 / DSM 20030 / JCM 1464 / CCM 169 / CCUG 5858 / IAM 1056 / NBRC 3333 / NCIMB 9278 / NCTC 2665 / VKM Ac-2230) (Micrococcus lysodeikticus)).